A 304-amino-acid chain; its full sequence is tRNA pseudouridine synthase B (304 aa).

Residue Asp-38 is the Nucleophile of the active site.

It belongs to the pseudouridine synthase TruB family. Type 1 subfamily.

It catalyses the reaction uridine(55) in tRNA = pseudouridine(55) in tRNA. Its function is as follows. Responsible for synthesis of pseudouridine from uracil-55 in the psi GC loop of transfer RNAs. This Listeria innocua serovar 6a (strain ATCC BAA-680 / CLIP 11262) protein is tRNA pseudouridine synthase B.